A 58-amino-acid chain; its full sequence is Large ribosomal subunit protein bL32 (58 aa).

2 disordered regions span residues 1 to 22 (MAVP…HWKR) and 39 to 58 (LSGR…DDEE).

This sequence belongs to the bacterial ribosomal protein bL32 family.

The protein is Large ribosomal subunit protein bL32 of Crocosphaera subtropica (strain ATCC 51142 / BH68) (Cyanothece sp. (strain ATCC 51142)).